The following is a 337-amino-acid chain: MKTATAPLPPLRSVKVLDQLRERIRYLHYSLRTEQAYVHWVRAFIRFHGVRHPATLGSSEVEAFLSWLANERKVSVSTHRQALAALLFFYGKVLCTDLPWLQEIGRPRPSRRLPVVLTPDEVVRILGFLEGEHRLFAQLLYGTGMRISEGLQLRVKDLDFDHGTIIVREGKGSKDRALMLPESLAPSLREQLSRARAWWLKDQAEGRSGVALPDALERKYPRAGHSWPWFWVFAQHTHSTDPRSGVVRRHHMYDQTFQRAFKRAVEQAGITKPATPHTLRHSFATALLRSGYDIRTVQDLLGHSDVSTTMIYTHVLKVGGAGVRSPLDALPPLTSER.

The Core-binding (CB) domain occupies 14–94 (VKVLDQLRER…ALLFFYGKVL (81 aa)). A Tyr recombinase domain is found at 112-328 (RLPVVLTPDE…GGAGVRSPLD (217 aa)). Catalysis depends on residues R146, K171, H277, R280, and H303. Y312 acts as the O-(3'-phospho-DNA)-tyrosine intermediate in catalysis.

The protein belongs to the 'phage' integrase family.

In terms of biological role, putative integrase believed to be involved in the insertion of antibiotic resistance genes into plasmids and transposons. In Escherichia coli, this protein is Integrase/recombinase (int).